Consider the following 617-residue polypeptide: Neurosecretory protein VGF (617 aa).

Residues 1–23 (MKTFTLPASVLFCFLLLIQGLGA) form the signal peptide. 3 disordered regions span residues 29–75 (PDVF…GELF), 93–204 (RPAS…ESPG), and 239–262 (SESA…THLG). Positions 48 to 64 (AVSRPKDDGVPEVRAAR) are enriched in basic and acidic residues. The segment covering 149 to 160 (DPEEDDRSEELE) has biased composition (acidic residues). The segment covering 182-197 (ETAAAETETRTHTLTR) has biased composition (low complexity). Q313 carries the post-translational modification Pyrrolidone carboxylic acid. Residues 345–364 (RQRDLGGRELQETQQERENE) are compositionally biased toward basic and acidic residues. The interval 345-599 (RQRDLGGREL…EEADAEERRL (255 aa)) is disordered. The segment covering 378-397 (EDDVGEEDEEAAEAEAEAEE) has biased composition (acidic residues). The span at 418–436 (AEDKRSQEEAPGHRRKDAE) shows a compositional bias: basic and acidic residues. S423 bears the Phosphoserine mark. Residues 437–452 (GAEEGGEEDDDDEEMD) show a composition bias toward acidic residues. Pro residues predominate over residues 491–501 (PPEPVPPPRAA). A compositionally biased stretch (basic and acidic residues) spans 577–599 (HHPDLEAQARRAQEEADAEERRL).

Interacts with HSPA8 on cell membrane. Interacts with C3AR1. Interacts with C1QBP.

The protein resides in the secreted. Its subcellular location is the cytoplasmic vesicle. It localises to the secretory vesicle. Its function is as follows. Secreted polyprotein that is packaged and proteolytically processed by prohormone convertases PCSK1 and PCSK2 in a cell-type-specific manner. VGF and peptides derived from its processing play many roles in neurogenesis and neuroplasticity associated with learning, memory, depression and chronic pain. In terms of biological role, plays a role in the control of body fluid homeostasis by regulating vasopressin release. Suppresses presynaptic glutamatergic neurons connected to vasopressin neurons. Functionally, plays a role in the control of body fluid homeostasis by regulating vasopressin release. Activates GABAergic interneurons which are inhibitory neurons of the nervous system and thereby suppresses presynaptic glutamatergic neurons. Also stimulates feeding behavior in an orexin-dependent manner in the hypothalamus. Functions as a positive regulator for the activation of orexin neurons resulting in elevated gastric acid secretion and gastric emptying. Secreted multifunctional peptide that interacts with different receptors and thereby plays multiple physiological roles including modulation of energy expenditure, pain, response to stress, gastric regulation as well as lipolysis. Activates the G-protein-coupled receptor C3AR1 via a folding-upon-binding mechanism leading to enhanced lipolysis in adipocytes. Interacts with gC1qR receptor in macrophages and microglia causing increased levels of intracellular calcium and hypersensitivity. Its function is as follows. Plays a role in the regulation of memory formation and depression-related behaviors potentially by influencing synaptic plasticity and neurogenesis. Induces acute and transient activation of the NTRK2/TRKB receptor and subsequent CREB phosphorylation. Also induces insulin secretion in insulinoma cells by increasing intracellular calcium mobilization. The chain is Neurosecretory protein VGF from Mus musculus (Mouse).